A 119-amino-acid polypeptide reads, in one-letter code: Large ribosomal subunit protein uL22 (119 aa).

This sequence belongs to the universal ribosomal protein uL22 family. As to quaternary structure, part of the 50S ribosomal subunit.

In terms of biological role, this protein binds specifically to 23S rRNA; its binding is stimulated by other ribosomal proteins, e.g. L4, L17, and L20. It is important during the early stages of 50S assembly. It makes multiple contacts with different domains of the 23S rRNA in the assembled 50S subunit and ribosome. Functionally, the globular domain of the protein is located near the polypeptide exit tunnel on the outside of the subunit, while an extended beta-hairpin is found that lines the wall of the exit tunnel in the center of the 70S ribosome. In Chlorobium phaeovibrioides (strain DSM 265 / 1930) (Prosthecochloris vibrioformis (strain DSM 265)), this protein is Large ribosomal subunit protein uL22.